A 325-amino-acid chain; its full sequence is Bifunctional ligase/repressor BirA (325 aa).

Positions 23–42 form a DNA-binding region, H-T-H motif; that stretch reads GQKISDALGCSRTAVWKHIE. One can recognise a BPL/LPL catalytic domain in the interval 74–262; the sequence is RFGLKTEVMG…CFEKRYRDYM (189 aa). Biotin contacts are provided by residues glutamine 118, 122 to 124, and lysine 189; that span reads RGR.

Belongs to the biotin--protein ligase family.

It carries out the reaction biotin + L-lysyl-[protein] + ATP = N(6)-biotinyl-L-lysyl-[protein] + AMP + diphosphate + H(+). Its function is as follows. Acts both as a biotin--[acetyl-CoA-carboxylase] ligase and a repressor. The sequence is that of Bifunctional ligase/repressor BirA from Bacillus subtilis (strain 168).